The following is a 316-amino-acid chain: Conjugated bile acid hydrolase (316 aa).

The active-site Nucleophile is Cys2. 2 residues coordinate deoxycholate: Cys2 and Arg18. Asn81 lines the taurine pocket.

This sequence belongs to the peptidase C59 family.

The catalysed reaction is cholate + taurine = taurocholate + H2O. It catalyses the reaction taurochenodeoxycholate + H2O = chenodeoxycholate + taurine. It carries out the reaction taurodeoxycholate + H2O = deoxycholate + taurine. The enzyme catalyses glycocholate + H2O = cholate + glycine. The catalysed reaction is glycodeoxycholate + H2O = deoxycholate + glycine. Its pathway is lipid metabolism; bile acid biosynthesis. Its function is as follows. Bile salt hydrolase that catalyzes the deconjugation of glycine- and taurine-linked bile salts, which occurs naturally in the intestines of humans, releasing amino acid residues and deconjugated bile salts (bile acids). Can hydrolyze the amide bond in the bile salts taurocholate (TCA), taurodeoxycholate (TDCA), taurochenodeoxycholate (TCDCA), glycocholate (GCA) and glycodeoxycholate (GDCA). Shows highest activity toward the taurine-conjugated bile salts TCA and TCDCA. The activity toward the other three substrates (TDCA, GCA and GDCA) is relatively low. This enzyme likely contributes to bile salt resistance of the strain and may be associated with survival capability of strain JCM1131 within the human intestine by bile detoxification. The chain is Conjugated bile acid hydrolase from Lactobacillus gasseri (strain ATCC 33323 / DSM 20243 / BCRC 14619 / CIP 102991 / JCM 1131 / KCTC 3163 / NCIMB 11718 / NCTC 13722 / AM63).